Reading from the N-terminus, the 247-residue chain is Lys-63-specific deubiquitinase BRCC36 (247 aa).

Alanine 2 carries the N-acetylalanine modification. In terms of domain architecture, MPN spans 12-179 (VHLESDAFLV…YTCFQSIQAQ (168 aa)). Zn(2+) contacts are provided by histidine 122, histidine 124, and aspartate 135. A JAMM motif motif is present at residues 122 to 135 (HSHPHITVWPSHVD). A Phosphoserine modification is found at serine 189.

This sequence belongs to the peptidase M67A family. BRCC36 subfamily. Component of the ARISC complex, at least composed of UIMC1/RAP80, ABRAXAS1, BRCC3/BRCC36, BABAM2 and BABAM1/NBA1. Component of the BRCA1-A complex, at least composed of BRCA1, BARD1, UIMC1/RAP80, ABRAXAS1, BRCC3/BRCC36, BABAM2 and BABAM1/NBA1. In the BRCA1-A complex, interacts directly with ABRAXAS1 and BABAM2. Component of the BRISC complex, at least composed of ABRAXAS2, BRCC3/BRCC36, BABAM2 and BABAM1/NBA1. Identified in a complex with SHMT2 and the other subunits of the BRISC complex. In the BRISC complex, interacts directly with ABRAXAS2. Identified in a complex with ABRAXAS2 and NUMA1. The BRISC complex interacts with the CSN complex. Component of the BRCA1/BRCA2 containing complex (BRCC), which also contains BRCA1, BRCA2, BARD1, BABAM2 and RAD51. BRCC is a ubiquitin E3 ligase complex that enhances cellular survival following DNA damage. Interacts with BRCA1. Binds polyubiquitin. Interacts with PWWP2B. Interacts with HDAC1; this interaction is enhanced in the presence of PWWP2B. It depends on Zn(2+) as a cofactor.

It is found in the nucleus. The protein resides in the cytoplasm. It localises to the cytoskeleton. Its subcellular location is the spindle pole. In terms of biological role, metalloprotease that specifically cleaves 'Lys-63'-linked polyubiquitin chains. Does not have activity toward 'Lys-48'-linked polyubiquitin chains. Component of the BRCA1-A complex, a complex that specifically recognizes 'Lys-63'-linked ubiquitinated histones H2A and H2AX at DNA lesions sites, leading to target the BRCA1-BARD1 heterodimer to sites of DNA damage at double-strand breaks (DSBs). In the BRCA1-A complex, it specifically removes 'Lys-63'-linked ubiquitin on histones H2A and H2AX, antagonizing the RNF8-dependent ubiquitination at double-strand breaks (DSBs). Catalytic subunit of the BRISC complex, a multiprotein complex that specifically cleaves 'Lys-63'-linked ubiquitin in various substrates. Mediates the specific 'Lys-63'-specific deubiquitination associated with the COP9 signalosome complex (CSN), via the interaction of the BRISC complex with the CSN complex. The BRISC complex is required for normal mitotic spindle assembly and microtubule attachment to kinetochores via its role in deubiquitinating NUMA1. Plays a role in interferon signaling via its role in the deubiquitination of the interferon receptor IFNAR1; deubiquitination increases IFNAR1 activity by enhancing its stability and cell surface expression. Acts as a regulator of the NLRP3 inflammasome by mediating deubiquitination of NLRP3, leading to NLRP3 inflammasome assembly. Down-regulates the response to bacterial lipopolysaccharide (LPS) via its role in IFNAR1 deubiquitination. Deubiquitinates HDAC1 and PWWP2B leading to their stabilization. This Pongo abelii (Sumatran orangutan) protein is Lys-63-specific deubiquitinase BRCC36 (BRCC3).